A 151-amino-acid chain; its full sequence is Ribosome maturation factor RimP (151 aa).

The protein belongs to the RimP family.

The protein resides in the cytoplasm. Required for maturation of 30S ribosomal subunits. This Caldanaerobacter subterraneus subsp. tengcongensis (strain DSM 15242 / JCM 11007 / NBRC 100824 / MB4) (Thermoanaerobacter tengcongensis) protein is Ribosome maturation factor RimP.